Here is a 323-residue protein sequence, read N- to C-terminus: Beta-ketoacyl-[acyl-carrier-protein] synthase III (323 aa).

Residues cysteine 113 and histidine 250 contribute to the active site. The segment at 251 to 255 (QANRR) is ACP-binding. Asparagine 280 is an active-site residue.

The protein belongs to the thiolase-like superfamily. FabH family. In terms of assembly, homodimer.

It localises to the cytoplasm. The catalysed reaction is malonyl-[ACP] + acetyl-CoA + H(+) = 3-oxobutanoyl-[ACP] + CO2 + CoA. It participates in lipid metabolism; fatty acid biosynthesis. Its function is as follows. Catalyzes the condensation reaction of fatty acid synthesis by the addition to an acyl acceptor of two carbons from malonyl-ACP. Catalyzes the first condensation reaction which initiates fatty acid synthesis and may therefore play a role in governing the total rate of fatty acid production. Possesses both acetoacetyl-ACP synthase and acetyl transacylase activities. Its substrate specificity determines the biosynthesis of branched-chain and/or straight-chain of fatty acids. This is Beta-ketoacyl-[acyl-carrier-protein] synthase III from Allorhizobium ampelinum (strain ATCC BAA-846 / DSM 112012 / S4) (Agrobacterium vitis (strain S4)).